The primary structure comprises 63 residues: ATPase inhibitor, mitochondrial (63 aa).

A disordered region spans residues 1–23; that stretch reads TAGATGATRQDGSTDAFEKREKA. A coiled-coil region spans residues 18–62; sequence EKREKAQEDLYIRQHEKEQLEALKESLKKQKKSLDDLEBKIDDLT.

Belongs to the ATPase inhibitor family.

The protein resides in the mitochondrion. Functionally, this protein forms a one-to-one complex with ATPase to inhibit the enzyme activity completely. The chain is ATPase inhibitor, mitochondrial from Cyberlindnera jadinii (Torula yeast).